The chain runs to 730 residues: Ribosomal RNA large subunit methyltransferase K/L (730 aa).

Residues 46 to 157 (TAYRLCVWSR…RGEAILSLDL (112 aa)) form the THUMP domain. The interval 394 to 418 (GERREAQPEGTEARQQVPQASEPAR) is disordered.

Belongs to the methyltransferase superfamily. RlmKL family.

The protein resides in the cytoplasm. It catalyses the reaction guanosine(2445) in 23S rRNA + S-adenosyl-L-methionine = N(2)-methylguanosine(2445) in 23S rRNA + S-adenosyl-L-homocysteine + H(+). It carries out the reaction guanosine(2069) in 23S rRNA + S-adenosyl-L-methionine = N(2)-methylguanosine(2069) in 23S rRNA + S-adenosyl-L-homocysteine + H(+). Its function is as follows. Specifically methylates the guanine in position 2445 (m2G2445) and the guanine in position 2069 (m7G2069) of 23S rRNA. In Pseudomonas putida (strain ATCC 700007 / DSM 6899 / JCM 31910 / BCRC 17059 / LMG 24140 / F1), this protein is Ribosomal RNA large subunit methyltransferase K/L.